The primary structure comprises 328 residues: Phosphate acyltransferase (328 aa).

It belongs to the PlsX family. Homodimer. Probably interacts with PlsY.

Its subcellular location is the cytoplasm. The catalysed reaction is a fatty acyl-[ACP] + phosphate = an acyl phosphate + holo-[ACP]. It functions in the pathway lipid metabolism; phospholipid metabolism. In terms of biological role, catalyzes the reversible formation of acyl-phosphate (acyl-PO(4)) from acyl-[acyl-carrier-protein] (acyl-ACP). This enzyme utilizes acyl-ACP as fatty acyl donor, but not acyl-CoA. This Staphylococcus aureus (strain Mu3 / ATCC 700698) protein is Phosphate acyltransferase.